The primary structure comprises 249 residues: Aspartate/glutamate leucyltransferase (249 aa).

The protein belongs to the R-transferase family. Bpt subfamily.

The protein localises to the cytoplasm. It carries out the reaction N-terminal L-glutamyl-[protein] + L-leucyl-tRNA(Leu) = N-terminal L-leucyl-L-glutamyl-[protein] + tRNA(Leu) + H(+). The catalysed reaction is N-terminal L-aspartyl-[protein] + L-leucyl-tRNA(Leu) = N-terminal L-leucyl-L-aspartyl-[protein] + tRNA(Leu) + H(+). Functions in the N-end rule pathway of protein degradation where it conjugates Leu from its aminoacyl-tRNA to the N-termini of proteins containing an N-terminal aspartate or glutamate. This is Aspartate/glutamate leucyltransferase from Xanthobacter autotrophicus (strain ATCC BAA-1158 / Py2).